The following is a 165-amino-acid chain: 3-hydroxyacyl-[acyl-carrier-protein] dehydratase FabZ (165 aa).

Histidine 64 is a catalytic residue.

This sequence belongs to the thioester dehydratase family. FabZ subfamily.

Its subcellular location is the cytoplasm. It catalyses the reaction a (3R)-hydroxyacyl-[ACP] = a (2E)-enoyl-[ACP] + H2O. Involved in unsaturated fatty acids biosynthesis. Catalyzes the dehydration of short chain beta-hydroxyacyl-ACPs and long chain saturated and unsaturated beta-hydroxyacyl-ACPs. The polypeptide is 3-hydroxyacyl-[acyl-carrier-protein] dehydratase FabZ (Acidiphilium cryptum (strain JF-5)).